The primary structure comprises 309 residues: Uracil phosphoribosyltransferase homolog (309 aa).

The disordered stretch occupies residues 1-38 (MATELQCPDSMPCHNQQVNSASTPSPEQLRPGDLILDH). Polar residues predominate over residues 13 to 26 (CHNQQVNSASTPSP). A Phosphoserine modification is found at serine 25. Residues arginine 133, arginine 142, and 176–179 (EKGN) contribute to the GTP site. 5-phospho-alpha-D-ribose 1-diphosphate is bound at residue arginine 186. GTP is bound by residues arginine 203 and arginine 232. A 5-phospho-alpha-D-ribose 1-diphosphate-binding site is contributed by 238–246 (YPILSTGNT). 299-301 (THF) is a binding site for uracil.

This sequence belongs to the UPRTase family. As to expression, highly expressed in leukocytes, liver, spleen and thymus, with lower expression in brain, lung and skeletal muscle.

Its subcellular location is the cytoplasm. The protein localises to the nucleus. The sequence is that of Uracil phosphoribosyltransferase homolog (UPRT) from Homo sapiens (Human).